The sequence spans 462 residues: Tubby-like F-box protein 7 (462 aa).

Residues 54–109 (SKWAGLPPELLRDVMKRLEEDDSNWPSRKDVVACASVCTTWRDMCKDIVRNPEFCG) enclose the F-box domain. Disordered regions lie at residues 317–338 (FSEFGGGALQGQEQEQDGDDVN) and 383–418 (QPSSGAASEPSQAGQAAQQQTQPSQPSSSSSSSSSN). The span at 383-417 (QPSSGAASEPSQAGQAAQQQTQPSQPSSSSSSSSS) shows a compositional bias: low complexity.

Belongs to the TUB family. As to expression, ubiquitous.

The protein is Tubby-like F-box protein 7 (TULP7) of Oryza sativa subsp. japonica (Rice).